Reading from the N-terminus, the 382-residue chain is Succinyl-diaminopimelate desuccinylase (382 aa).

Zn(2+) is bound at residue His-73. Residue Asp-75 is part of the active site. Asp-106 is a Zn(2+) binding site. The active-site Proton acceptor is the Glu-140. Zn(2+)-binding residues include Glu-141, Glu-169, and His-355.

Belongs to the peptidase M20A family. DapE subfamily. Homodimer. It depends on Zn(2+) as a cofactor. Co(2+) serves as cofactor.

The enzyme catalyses N-succinyl-(2S,6S)-2,6-diaminopimelate + H2O = (2S,6S)-2,6-diaminopimelate + succinate. It participates in amino-acid biosynthesis; L-lysine biosynthesis via DAP pathway; LL-2,6-diaminopimelate from (S)-tetrahydrodipicolinate (succinylase route): step 3/3. Functionally, catalyzes the hydrolysis of N-succinyl-L,L-diaminopimelic acid (SDAP), forming succinate and LL-2,6-diaminopimelate (DAP), an intermediate involved in the bacterial biosynthesis of lysine and meso-diaminopimelic acid, an essential component of bacterial cell walls. The chain is Succinyl-diaminopimelate desuccinylase from Leptothrix cholodnii (strain ATCC 51168 / LMG 8142 / SP-6) (Leptothrix discophora (strain SP-6)).